Here is a 484-residue protein sequence, read N- to C-terminus: Cholesterol 22-hydroxylase CYP90B27 (484 aa).

Residues A2–F22 form a helical membrane-spanning segment. C429 contacts heme.

This sequence belongs to the cytochrome P450 family. In terms of tissue distribution, expressed in roots.

The protein resides in the membrane. The enzyme catalyses cholesterol + reduced [NADPH--hemoprotein reductase] + O2 = (22R)-hydroxycholesterol + oxidized [NADPH--hemoprotein reductase] + H2O + H(+). It functions in the pathway steroid metabolism; cholesterol metabolism. Its function is as follows. Involved in the biosynthesis of steroidal saponins and alkaloids natural products from cholesterol such as spirostane-type saponins and polyphyllins, compounds with pharmacological activity. Catalyzes the C-22 hydroxylation of cholesterol to form 22R-hydroxycholesterol. The protein is Cholesterol 22-hydroxylase CYP90B27 of Paris polyphylla (Daiswa polyphylla).